The primary structure comprises 214 residues: Probable transaldolase (214 aa).

Catalysis depends on lysine 83, which acts as the Schiff-base intermediate with substrate.

Belongs to the transaldolase family. Type 3B subfamily.

The protein resides in the cytoplasm. It catalyses the reaction D-sedoheptulose 7-phosphate + D-glyceraldehyde 3-phosphate = D-erythrose 4-phosphate + beta-D-fructose 6-phosphate. Its pathway is carbohydrate degradation; pentose phosphate pathway; D-glyceraldehyde 3-phosphate and beta-D-fructose 6-phosphate from D-ribose 5-phosphate and D-xylulose 5-phosphate (non-oxidative stage): step 2/3. In terms of biological role, transaldolase is important for the balance of metabolites in the pentose-phosphate pathway. The protein is Probable transaldolase of Geobacter sp. (strain M21).